The following is a 243-amino-acid chain: MSTNPKPAFRRILLKLSGEALMGEEGFGIDPKVLDRMAQEVKELVELGIQVGVVIGGGNLFRGEGLAKAGMNRVVGDHMGMLATVMNGLAMRDALHRAYVNARLMSAIPLKGVCDDYNWAEAISLLKSGRVVIFAAGTGNPFCTTDSAACLRGIEIEAEVVLKGTKVDGVYSADPMKDPDAVKHDVLSYNEVLERELKVMDLAAFTLARDHNMPILVFNMNKPGALRRVIMGEEEGTYIKNLN.

An ATP-binding site is contributed by 15 to 18; sequence KLSG. Residues 23–28 form an involved in allosteric activation by GTP region; sequence GEEGFG. Residue Gly57 participates in UMP binding. The ATP site is built by Gly58 and Arg62. UMP contacts are provided by residues Asp77 and 138 to 145; that span reads TGNPFCTT. ATP is bound by residues Thr165, Tyr171, and Asp174.

The protein belongs to the UMP kinase family. As to quaternary structure, homohexamer.

The protein localises to the cytoplasm. The catalysed reaction is UMP + ATP = UDP + ADP. The protein operates within pyrimidine metabolism; CTP biosynthesis via de novo pathway; UDP from UMP (UMPK route): step 1/1. With respect to regulation, allosterically activated by GTP. Inhibited by UTP. Functionally, catalyzes the reversible phosphorylation of UMP to UDP. In Shewanella denitrificans (strain OS217 / ATCC BAA-1090 / DSM 15013), this protein is Uridylate kinase.